The sequence spans 242 residues: uncharacterized protein (242 aa).

Residues 3–116 (TALVIDDEPF…RLRKTVKRLS (114 aa)) form the Response regulatory domain. Position 54 is a 4-aspartylphosphate (Asp-54). The region spanning 139–240 (IPCIGHNRIV…LKLLKEMLGL (102 aa)) is the HTH LytTR-type domain.

This is an uncharacterized protein from Vibrio vulnificus (strain CMCP6).